Consider the following 487-residue polypeptide: N-succinylglutamate 5-semialdehyde dehydrogenase (487 aa).

221 to 226 (GSSRTG) lines the NAD(+) pocket. Residues Glu244 and Cys278 contribute to the active site.

It belongs to the aldehyde dehydrogenase family. AstD subfamily.

It catalyses the reaction N-succinyl-L-glutamate 5-semialdehyde + NAD(+) + H2O = N-succinyl-L-glutamate + NADH + 2 H(+). The protein operates within amino-acid degradation; L-arginine degradation via AST pathway; L-glutamate and succinate from L-arginine: step 4/5. Functionally, catalyzes the NAD-dependent reduction of succinylglutamate semialdehyde into succinylglutamate. This Pseudomonas putida (strain W619) protein is N-succinylglutamate 5-semialdehyde dehydrogenase.